A 140-amino-acid polypeptide reads, in one-letter code: Thioredoxin M-type, chloroplastic (140 aa).

The transit peptide at 1 to 34 (MALVARRAAVPSARSSARPAFARAAPRRSVVVRA) directs the protein to the chloroplast. Residues 35–140 (EAGAVNDDTF…IVQTVEKYLN (106 aa)) form the Thioredoxin domain. Residues Cys64 and Cys67 each act as nucleophile in the active site. The cysteines at positions 64 and 67 are disulfide-linked.

This sequence belongs to the thioredoxin family. Plant M-type subfamily. Forms a complex with heterodimeric ferredoxin-thioredoxin reductase (FTR) and ferredoxin.

The protein localises to the plastid. The protein resides in the chloroplast. Its function is as follows. Participates in various redox reactions through the reversible oxidation of the active center dithiol to a disulfide. The M form is known to activate NADP-malate dehydrogenase. In Chlamydomonas reinhardtii (Chlamydomonas smithii), this protein is Thioredoxin M-type, chloroplastic (TRXM).